Here is a 352-residue protein sequence, read N- to C-terminus: Ion-translocating oxidoreductase complex subunit D (352 aa).

Helical transmembrane passes span 20–40 (IMLL…RFFG), 42–62 (GTLV…ALVL), 78–109 (ALLT…VIIA), 123–143 (PAMI…TSWL), and 148–168 (IAVN…GHTA). Residue threonine 187 is modified to FMN phosphoryl threonine. The next 4 helical transmembrane spans lie at 214-234 (ILAG…GVWL), 242-262 (WHIP…GWLF), 267-287 (LAAP…FFIL), and 301-318 (LMFG…RSFG).

This sequence belongs to the NqrB/RnfD family. The complex is composed of six subunits: RsxA, RsxB, RsxC, RsxD, RsxE and RsxG. FMN serves as cofactor.

The protein resides in the cell inner membrane. In terms of biological role, part of a membrane-bound complex that couples electron transfer with translocation of ions across the membrane. Required to maintain the reduced state of SoxR. The protein is Ion-translocating oxidoreductase complex subunit D of Shigella flexneri.